The chain runs to 396 residues: Ornithine aminotransferase (396 aa).

Lysine 255 bears the N6-(pyridoxal phosphate)lysine mark.

The protein belongs to the class-III pyridoxal-phosphate-dependent aminotransferase family. OAT subfamily. The cofactor is pyridoxal 5'-phosphate.

It localises to the cytoplasm. It catalyses the reaction a 2-oxocarboxylate + L-ornithine = L-glutamate 5-semialdehyde + an L-alpha-amino acid. It functions in the pathway amino-acid biosynthesis; L-proline biosynthesis; L-glutamate 5-semialdehyde from L-ornithine: step 1/1. In terms of biological role, catalyzes the interconversion of ornithine to glutamate semialdehyde. In Bacillus cereus (strain Q1), this protein is Ornithine aminotransferase.